The sequence spans 541 residues: 2-isopropylmalate synthase (541 aa).

A Pyruvate carboxyltransferase domain is found at 8 to 284 (VIIFDTTLRD…LTNINTRHIY (277 aa)). Mn(2+) contacts are provided by D17, H208, H210, and N244. Positions 408–541 (RLELVQVSCG…DQPTEVVAGS (134 aa)) are regulatory domain.

Belongs to the alpha-IPM synthase/homocitrate synthase family. LeuA type 1 subfamily. In terms of assembly, homodimer. Mn(2+) serves as cofactor.

The protein localises to the cytoplasm. It carries out the reaction 3-methyl-2-oxobutanoate + acetyl-CoA + H2O = (2S)-2-isopropylmalate + CoA + H(+). Its pathway is amino-acid biosynthesis; L-leucine biosynthesis; L-leucine from 3-methyl-2-oxobutanoate: step 1/4. In terms of biological role, catalyzes the condensation of the acetyl group of acetyl-CoA with 3-methyl-2-oxobutanoate (2-ketoisovalerate) to form 3-carboxy-3-hydroxy-4-methylpentanoate (2-isopropylmalate). In Trichodesmium erythraeum (strain IMS101), this protein is 2-isopropylmalate synthase.